The following is a 336-amino-acid chain: tRNA N6-adenosine threonylcarbamoyltransferase (336 aa).

His115, His119, and Tyr136 together coordinate Fe cation. Residues 136–140, Asp168, Glu185, and Ser266 contribute to the substrate site; that span reads YVAGG. A Fe cation-binding site is contributed by Asp294.

Belongs to the KAE1 / TsaD family. Requires Fe(2+) as cofactor.

The protein resides in the cytoplasm. It catalyses the reaction L-threonylcarbamoyladenylate + adenosine(37) in tRNA = N(6)-L-threonylcarbamoyladenosine(37) in tRNA + AMP + H(+). Required for the formation of a threonylcarbamoyl group on adenosine at position 37 (t(6)A37) in tRNAs that read codons beginning with adenine. Is probably involved in the transfer of the threonylcarbamoyl moiety of threonylcarbamoyl-AMP (TC-AMP) to the N6 group of A37. This Thermofilum pendens (strain DSM 2475 / Hrk 5) protein is tRNA N6-adenosine threonylcarbamoyltransferase.